The chain runs to 255 residues: 3-deoxy-manno-octulosonate cytidylyltransferase (255 aa).

This sequence belongs to the KdsB family.

It localises to the cytoplasm. It catalyses the reaction 3-deoxy-alpha-D-manno-oct-2-ulosonate + CTP = CMP-3-deoxy-beta-D-manno-octulosonate + diphosphate. It participates in nucleotide-sugar biosynthesis; CMP-3-deoxy-D-manno-octulosonate biosynthesis; CMP-3-deoxy-D-manno-octulosonate from 3-deoxy-D-manno-octulosonate and CTP: step 1/1. It functions in the pathway bacterial outer membrane biogenesis; lipopolysaccharide biosynthesis. Its function is as follows. Activates KDO (a required 8-carbon sugar) for incorporation into bacterial lipopolysaccharide in Gram-negative bacteria. This chain is 3-deoxy-manno-octulosonate cytidylyltransferase, found in Xanthobacter autotrophicus (strain ATCC BAA-1158 / Py2).